Consider the following 359-residue polypeptide: Phospho-N-acetylmuramoyl-pentapeptide-transferase (359 aa).

10 helical membrane passes run 7-27, 28-48, 82-102, 103-123, 147-167, 179-199, 203-223, 229-249, 256-276, and 337-357; these read RSLT…VNSY, IFNS…SLVI, MGGI…NNYV, DSVG…IGFL, ALIA…NPLI, IVIF…VNLT, DGLA…EIFI, LIIY…FLKY, IFMG…ISIL, and IVEN…VLKI.

This sequence belongs to the glycosyltransferase 4 family. MraY subfamily. The cofactor is Mg(2+).

The protein localises to the cell inner membrane. The catalysed reaction is UDP-N-acetyl-alpha-D-muramoyl-L-alanyl-gamma-D-glutamyl-meso-2,6-diaminopimeloyl-D-alanyl-D-alanine + di-trans,octa-cis-undecaprenyl phosphate = di-trans,octa-cis-undecaprenyl diphospho-N-acetyl-alpha-D-muramoyl-L-alanyl-D-glutamyl-meso-2,6-diaminopimeloyl-D-alanyl-D-alanine + UMP. Its pathway is cell wall biogenesis; peptidoglycan biosynthesis. Catalyzes the initial step of the lipid cycle reactions in the biosynthesis of the cell wall peptidoglycan: transfers peptidoglycan precursor phospho-MurNAc-pentapeptide from UDP-MurNAc-pentapeptide onto the lipid carrier undecaprenyl phosphate, yielding undecaprenyl-pyrophosphoryl-MurNAc-pentapeptide, known as lipid I. The chain is Phospho-N-acetylmuramoyl-pentapeptide-transferase from Prochlorococcus marinus subsp. pastoris (strain CCMP1986 / NIES-2087 / MED4).